A 282-amino-acid chain; its full sequence is V-set domain-containing T-cell activation inhibitor 1 (282 aa).

An N-terminal signal peptide occupies residues Met1–Val24. 2 consecutive Ig-like V-type domains span residues His35–Glu144 and Pro153–Thr241. Cystine bridges form between Cys56–Cys130 and Cys168–Cys225. Asn216 carries an N-linked (GlcNAc...) asparagine glycan. The GPI-anchor amidated glycine moiety is linked to residue Gly257. The propeptide at Pro258–Arg282 is removed in mature form.

This sequence belongs to the immunoglobulin superfamily. BTN/MOG family. Post-translationally, N-glycosylated.

It is found in the cell membrane. Negatively regulates T-cell-mediated immune response by inhibiting T-cell activation, proliferation, cytokine production and development of cytotoxicity. When expressed on the cell surface of tumor macrophages, plays an important role, together with regulatory T-cells (Treg), in the suppression of tumor-associated antigen-specific T-cell immunity. Involved in promoting epithelial cell transformation. The protein is V-set domain-containing T-cell activation inhibitor 1 of Rattus norvegicus (Rat).